The chain runs to 149 residues: Transcriptional repressor NrdR (149 aa).

A zinc finger lies at 3-34; it reads CPFCFAVDTKVIDSRLVGEGSSVRRRRQCLVC. The 91-residue stretch at 49 to 139 folds into the ATP-cone domain; the sequence is PRVVKSNDVR…VYRSFEDIKE (91 aa).

This sequence belongs to the NrdR family. Zn(2+) serves as cofactor.

Functionally, negatively regulates transcription of bacterial ribonucleotide reductase nrd genes and operons by binding to NrdR-boxes. This Escherichia coli O139:H28 (strain E24377A / ETEC) protein is Transcriptional repressor NrdR.